A 558-amino-acid chain; its full sequence is Oxygen-dependent choline dehydrogenase (558 aa).

Position 4 to 33 (4 to 33 (DYIIIGAGSAGNVLATRLTEDSDTTVLLLE)) interacts with FAD. H473 acts as the Proton acceptor in catalysis.

This sequence belongs to the GMC oxidoreductase family. FAD serves as cofactor.

It carries out the reaction choline + A = betaine aldehyde + AH2. It catalyses the reaction betaine aldehyde + NAD(+) + H2O = glycine betaine + NADH + 2 H(+). Its pathway is amine and polyamine biosynthesis; betaine biosynthesis via choline pathway; betaine aldehyde from choline (cytochrome c reductase route): step 1/1. Its function is as follows. Involved in the biosynthesis of the osmoprotectant glycine betaine. Catalyzes the oxidation of choline to betaine aldehyde and betaine aldehyde to glycine betaine at the same rate. The polypeptide is Oxygen-dependent choline dehydrogenase (Citrobacter koseri (strain ATCC BAA-895 / CDC 4225-83 / SGSC4696)).